A 159-amino-acid chain; its full sequence is Phosphopantetheine adenylyltransferase (159 aa).

A substrate-binding site is contributed by Thr9. ATP-binding positions include 9–10 (TF) and His17. 3 residues coordinate substrate: Lys41, Leu73, and Arg87. ATP-binding positions include 88 to 90 (GLR), Glu98, and 123 to 129 (YSFISST).

Belongs to the bacterial CoaD family. Homohexamer. Mg(2+) serves as cofactor.

Its subcellular location is the cytoplasm. It carries out the reaction (R)-4'-phosphopantetheine + ATP + H(+) = 3'-dephospho-CoA + diphosphate. Its pathway is cofactor biosynthesis; coenzyme A biosynthesis; CoA from (R)-pantothenate: step 4/5. In terms of biological role, reversibly transfers an adenylyl group from ATP to 4'-phosphopantetheine, yielding dephospho-CoA (dPCoA) and pyrophosphate. The sequence is that of Phosphopantetheine adenylyltransferase from Pseudomonas putida (strain ATCC 700007 / DSM 6899 / JCM 31910 / BCRC 17059 / LMG 24140 / F1).